The sequence spans 83 residues: UPF0297 protein LEUM_0557 (83 aa).

It belongs to the UPF0297 family.

This is UPF0297 protein LEUM_0557 from Leuconostoc mesenteroides subsp. mesenteroides (strain ATCC 8293 / DSM 20343 / BCRC 11652 / CCM 1803 / JCM 6124 / NCDO 523 / NBRC 100496 / NCIMB 8023 / NCTC 12954 / NRRL B-1118 / 37Y).